Here is a 1214-residue protein sequence, read N- to C-terminus: [F-actin]-monooxygenase mical1 (1214 aa).

Residues 1 to 488 (MVNPLDSVNP…KRLYEAEEQE (488 aa)) are monooxygenase domain. FAD-binding positions include Cys-96, 115 to 117 (EKR), 122 to 124 (RNN), Phe-182, Tyr-292, and Asp-392. The tract at residues 484 to 505 (AEEQESKPNKLKKPDIKAKPRK) is disordered. The Calponin-homology (CH) domain occupies 508–614 (MKRLEELLSW…YLTQIRNALT (107 aa)). A disordered region spans residues 649–676 (HKDRLASVKGPRQQNMKEKEEKKDVKEE). Residues 663 to 676 (NMKEKEEKKDVKEE) show a composition bias toward basic and acidic residues. An LIM zinc-binding domain is found at 686–748 (EPCYFCKKHL…ELHSLAEEEE (63 aa)). Positions 688, 691, 709, 712, 715, 718, 738, and 741 each coordinate Zn(2+). Residues 747-1019 (EEGDEGHGGA…DDEDEDEEDL (273 aa)) form a disordered region. Acidic residues predominate over residues 796–815 (PDFDESTEFPAPDQDEPPDL). A compositionally biased stretch (polar residues) spans 828–841 (SAENTNMENQQHNI). Residues 910–922 (RGSSSAASTSSSS) show a composition bias toward low complexity. Polar residues predominate over residues 974–987 (SPWNLSSPRLQQRF). The span at 1003 to 1019 (VSEDDNEDDEDEDEEDL) shows a compositional bias: acidic residues. The region spanning 1053–1199 (KMTEIQRFHK…EVNDQFNSSL (147 aa)) is the bMERB domain. A coiled-coil region spans residues 1061 to 1131 (HKAQSIQRRL…DLMVASRQLE (71 aa)). Positions 1194–1214 (QFNSSLDAKRRSTTASQVHWE) are disordered.

This sequence belongs to the Mical family. FAD serves as cofactor.

It localises to the cytoplasm. The protein resides in the cytoskeleton. The protein localises to the midbody. Its subcellular location is the endosome membrane. It carries out the reaction L-methionyl-[F-actin] + NADPH + O2 + H(+) = L-methionyl-(R)-S-oxide-[F-actin] + NADP(+) + H2O. The catalysed reaction is NADPH + O2 + H(+) = H2O2 + NADP(+). In terms of biological role, monooxygenase that promotes depolymerization of F-actin by mediating oxidation of specific methionine residues on actin to form methionine-sulfoxide, resulting in actin filament disassembly and prevent repolymerization. May be involved in endosomal tubule extension and neosynthesized protein export. In Danio rerio (Zebrafish), this protein is [F-actin]-monooxygenase mical1 (mical1).